We begin with the raw amino-acid sequence, 173 residues long: Cytochrome c homolog (173 aa).

Residues 1 to 8 (MSGKELNK) lie on the Cytoplasmic side of the membrane. Residues 9-29 (IVAAILFASLIAMMVGFIANI) traverse the membrane as a helical; Signal-anchor segment. At 30-173 (LYKPVLEPKH…LFLKTYVHDK (144 aa)) the chain is on the periplasmic side. Heme c-binding residues include Cys-82, Cys-85, His-86, and Met-148.

Belongs to the cytochrome c family. In terms of processing, binds 1 heme c group covalently per subunit.

Its subcellular location is the cell membrane. May be involved in electron transfer from bc1 complex to aa3. In Rickettsia bellii (strain RML369-C), this protein is Cytochrome c homolog (cycM).